The chain runs to 81 residues: Xenopsin peptides (81 aa).

Residues 1 to 20 (MYKGIFLCVLLAVICANSLA) form the signal peptide. A propeptide spanning residues 21 to 37 (TPSSDADEDNDEVERYV) is cleaved from the precursor. The propeptide at 65-73 (EAMLRSAEA) is removed in mature form by a dipeptidylpeptidase.

This sequence belongs to the gastrin/cholecystokinin family. Magainin subfamily. As to expression, XPF is synthesized in the stomach and stored in a novel granular multinucleated cell in the gastric mucosa, it is stored as active, processed peptides in large granules within the granular gland secretions of the skin.

It localises to the secreted. Functionally, xenopsin is a neurotensin-like octapeptide. In terms of biological role, XPF has antimicrobial activity. This Xenopus laevis (African clawed frog) protein is Xenopsin peptides.